Reading from the N-terminus, the 439-residue chain is ATP-dependent protease ATPase subunit HslU (439 aa).

Residues Ile17, 59–64, Asp251, Glu317, and Arg389 contribute to the ATP site; that span reads GVGKTE.

This sequence belongs to the ClpX chaperone family. HslU subfamily. A double ring-shaped homohexamer of HslV is capped on each side by a ring-shaped HslU homohexamer. The assembly of the HslU/HslV complex is dependent on binding of ATP.

It is found in the cytoplasm. In terms of biological role, ATPase subunit of a proteasome-like degradation complex; this subunit has chaperone activity. The binding of ATP and its subsequent hydrolysis by HslU are essential for unfolding of protein substrates subsequently hydrolyzed by HslV. HslU recognizes the N-terminal part of its protein substrates and unfolds these before they are guided to HslV for hydrolysis. The protein is ATP-dependent protease ATPase subunit HslU of Campylobacter jejuni (strain RM1221).